Here is a 377-residue protein sequence, read N- to C-terminus: 4-hydroxy-tetrahydrodipicolinate synthase 2, chloroplastic (377 aa).

The N-terminal 51 residues, 1–51, are a transit peptide targeting the chloroplast; the sequence is MMAAQPTANPGVRLGWKAPGALASPPRLALSRSAAAPLASHRVGRGKFSAA. A pyruvate-binding site is contributed by Thr-120. The active-site Proton donor/acceptor is Tyr-206. Lys-234 functions as the Schiff-base intermediate with substrate in the catalytic mechanism. Ile-273 contacts pyruvate.

The protein belongs to the DapA family. Tetramer of modified subunits derived from two genes in different combinations.

The protein localises to the plastid. It localises to the chloroplast. The enzyme catalyses L-aspartate 4-semialdehyde + pyruvate = (2S,4S)-4-hydroxy-2,3,4,5-tetrahydrodipicolinate + H2O + H(+). It functions in the pathway amino-acid biosynthesis; L-lysine biosynthesis via DAP pathway; (S)-tetrahydrodipicolinate from L-aspartate: step 3/4. Sensitive to lysine inhibition. This inhibition increase in an allosteric manner with increasing concentration of the inhibitor. Its function is as follows. Catalyzes the condensation of (S)-aspartate-beta-semialdehyde [(S)-ASA] and pyruvate to 4-hydroxy-tetrahydrodipicolinate (HTPA). The chain is 4-hydroxy-tetrahydrodipicolinate synthase 2, chloroplastic from Triticum aestivum (Wheat).